Consider the following 462-residue polypeptide: UDP-N-acetylmuramate--L-alanine ligase (462 aa).

117–123 serves as a coordination point for ATP; it reads GTHGKTT.

It belongs to the MurCDEF family.

It is found in the cytoplasm. The catalysed reaction is UDP-N-acetyl-alpha-D-muramate + L-alanine + ATP = UDP-N-acetyl-alpha-D-muramoyl-L-alanine + ADP + phosphate + H(+). The protein operates within cell wall biogenesis; peptidoglycan biosynthesis. Cell wall formation. The polypeptide is UDP-N-acetylmuramate--L-alanine ligase (Streptomyces coelicolor (strain ATCC BAA-471 / A3(2) / M145)).